A 103-amino-acid polypeptide reads, in one-letter code: Integration host factor subunit alpha (103 aa).

The segment at 51-73 is disordered; that stretch reads FGNFQLRDKPQRPGRNPKTGEEI.

Belongs to the bacterial histone-like protein family. In terms of assembly, heterodimer of an alpha and a beta chain.

Its function is as follows. This protein is one of the two subunits of integration host factor, a specific DNA-binding protein that functions in genetic recombination as well as in transcriptional and translational control. This chain is Integration host factor subunit alpha, found in Azoarcus sp. (strain BH72).